A 501-amino-acid chain; its full sequence is Probable cytochrome P450 28d2 (501 aa).

Cys-446 is a binding site for heme.

The protein belongs to the cytochrome P450 family. It depends on heme as a cofactor.

Its subcellular location is the endoplasmic reticulum membrane. The protein resides in the microsome membrane. In terms of biological role, may be involved in the metabolism of insect hormones and in the breakdown of synthetic insecticides. The polypeptide is Probable cytochrome P450 28d2 (Cyp28d2) (Drosophila melanogaster (Fruit fly)).